The chain runs to 907 residues: Phosphoenolpyruvate carboxylase (907 aa).

Catalysis depends on residues histidine 138 and lysine 570.

The protein belongs to the PEPCase type 1 family. Requires Mg(2+) as cofactor.

The catalysed reaction is oxaloacetate + phosphate = phosphoenolpyruvate + hydrogencarbonate. Its function is as follows. Forms oxaloacetate, a four-carbon dicarboxylic acid source for the tricarboxylic acid cycle. The chain is Phosphoenolpyruvate carboxylase from Streptococcus mutans serotype c (strain ATCC 700610 / UA159).